The primary structure comprises 74 residues: Exodeoxyribonuclease 7 small subunit (74 aa).

It belongs to the XseB family. As to quaternary structure, heterooligomer composed of large and small subunits.

It localises to the cytoplasm. The enzyme catalyses Exonucleolytic cleavage in either 5'- to 3'- or 3'- to 5'-direction to yield nucleoside 5'-phosphates.. Its function is as follows. Bidirectionally degrades single-stranded DNA into large acid-insoluble oligonucleotides, which are then degraded further into small acid-soluble oligonucleotides. This is Exodeoxyribonuclease 7 small subunit from Clostridium beijerinckii (strain ATCC 51743 / NCIMB 8052) (Clostridium acetobutylicum).